The following is a 119-amino-acid chain: Protein TusC (119 aa).

This sequence belongs to the DsrF/TusC family. As to quaternary structure, heterohexamer, formed by a dimer of trimers. The hexameric TusBCD complex contains 2 copies each of TusB, TusC and TusD. The TusBCD complex interacts with TusE.

The protein resides in the cytoplasm. Part of a sulfur-relay system required for 2-thiolation of 5-methylaminomethyl-2-thiouridine (mnm(5)s(2)U) at tRNA wobble positions. The chain is Protein TusC from Buchnera aphidicola subsp. Schizaphis graminum (strain Sg).